A 138-amino-acid chain; its full sequence is Small ribosomal subunit protein uS8c (138 aa).

Belongs to the universal ribosomal protein uS8 family. As to quaternary structure, part of the 30S ribosomal subunit.

It localises to the plastid. Its subcellular location is the chloroplast. In terms of biological role, one of the primary rRNA binding proteins, it binds directly to 16S rRNA central domain where it helps coordinate assembly of the platform of the 30S subunit. The chain is Small ribosomal subunit protein uS8c (rps8) from Chlorella vulgaris (Green alga).